Here is a 210-residue protein sequence, read N- to C-terminus: Mating-type-like protein ALPHA2, silenced copy at MTL3 (210 aa).

Residues 108 to 170 (ASYRGHRFTR…NRRRKQKSIY (63 aa)) constitute a DNA-binding region (homeobox; TALE-type).

It belongs to the TALE/M-ATYP homeobox family.

The protein resides in the nucleus. Mating type proteins are sequence specific DNA-binding proteins that act as master switches in yeast differentiation by controlling gene expression in a cell type-specific fashion. This chain is Mating-type-like protein ALPHA2, silenced copy at MTL3 (MTL3alpha2), found in Candida glabrata (strain ATCC 2001 / BCRC 20586 / JCM 3761 / NBRC 0622 / NRRL Y-65 / CBS 138) (Yeast).